The following is a 420-amino-acid chain: Phosphoribosylamine--glycine ligase (420 aa).

Residues 108-314 (KQFMEKYAIP…FAALIDALLH (207 aa)) form the ATP-grasp domain. Residue 134 to 195 (LDERGVPIVI…EDFLAGEEFS (62 aa)) participates in ATP binding. Residues Glu284 and Asn286 each coordinate Mg(2+).

This sequence belongs to the GARS family. Mg(2+) serves as cofactor. It depends on Mn(2+) as a cofactor.

The enzyme catalyses 5-phospho-beta-D-ribosylamine + glycine + ATP = N(1)-(5-phospho-beta-D-ribosyl)glycinamide + ADP + phosphate + H(+). It participates in purine metabolism; IMP biosynthesis via de novo pathway; N(1)-(5-phospho-D-ribosyl)glycinamide from 5-phospho-alpha-D-ribose 1-diphosphate: step 2/2. This is Phosphoribosylamine--glycine ligase from Listeria monocytogenes serotype 4b (strain F2365).